The sequence spans 309 residues: Probable cell division protein kinase ECU11_1290 (309 aa).

One can recognise a Protein kinase domain in the interval 4–288 (YENIKQVGEG…VISSHKNTYI (285 aa)). Residues 10 to 18 (VGEGAFGQV) and Lys33 each bind ATP. Asp124 acts as the Proton acceptor in catalysis.

Belongs to the protein kinase superfamily. CMGC Ser/Thr protein kinase family. CDC2/CDKX subfamily.

It localises to the nucleus. It catalyses the reaction L-seryl-[protein] + ATP = O-phospho-L-seryl-[protein] + ADP + H(+). The catalysed reaction is L-threonyl-[protein] + ATP = O-phospho-L-threonyl-[protein] + ADP + H(+). May play a role in the control of the eukaryotic cell cycle. This Encephalitozoon cuniculi (strain GB-M1) (Microsporidian parasite) protein is Probable cell division protein kinase ECU11_1290.